Consider the following 956-residue polypeptide: Translation initiation factor IF-2 (956 aa).

The segment at 50 to 351 (FPADSGGAAN…APSIGGVQVP (302 aa)) is disordered. The segment covering 64–95 (APKPARAPKPAPKAAPAPPVEEAPAEPAPPAA) has biased composition (pro residues). Low complexity-rich tracts occupy residues 96 to 107 (PEVVAAPEAPVA) and 121 to 136 (PEAP…ARPA). The segment covering 146-155 (AAEKPADTRT) has biased composition (basic and acidic residues). Composition is skewed to gly residues over residues 171–192 (RPGG…GGPR) and 206–234 (RPGG…GQGG). The segment covering 235 to 254 (SRPSPGMMPGRSAVGRPGAP) has biased composition (low complexity). Positions 255–320 (ARGGSGGPGG…GTQGAFGRAG (66 aa)) are enriched in gly residues. Over residues 324 to 333 (VRARKSRRAK) the composition is skewed to basic residues. Positions 448–619 (ARPPVVTVMG…AVLLTADAAL (172 aa)) constitute a tr-type G domain. The segment at 457-464 (GHVDHGKT) is G1. 457–464 (GHVDHGKT) contributes to the GTP binding site. The interval 482-486 (GITQH) is G2. The tract at residues 507–510 (DTPG) is G3. Residues 507–511 (DTPGH) and 561–564 (NKVD) contribute to the GTP site. The segment at 561–564 (NKVD) is G4. The tract at residues 597–599 (SAK) is G5.

The protein belongs to the TRAFAC class translation factor GTPase superfamily. Classic translation factor GTPase family. IF-2 subfamily.

The protein resides in the cytoplasm. Functionally, one of the essential components for the initiation of protein synthesis. Protects formylmethionyl-tRNA from spontaneous hydrolysis and promotes its binding to the 30S ribosomal subunits. Also involved in the hydrolysis of GTP during the formation of the 70S ribosomal complex. The polypeptide is Translation initiation factor IF-2 (Beutenbergia cavernae (strain ATCC BAA-8 / DSM 12333 / CCUG 43141 / JCM 11478 / NBRC 16432 / NCIMB 13614 / HKI 0122)).